The primary structure comprises 183 residues: MLTMDDIVREGHPALREVATEVTFPLSDEEKKLGRDMLEFLINSQDEDLAEKYGLRGGVGIAAPQLAVTKRFLAIHVHDEKDRLYSYVLYNPKIRSHSVQQACLSGGEGCLSVDREVPGYVVRSERVTIDAFDENGTPLKLRFKGYPAIVIQHEIDHLNGIMFYDHINKENPSYLPPDVDVFG.

Positions 110 and 153 each coordinate Fe cation. Residue Glu154 is part of the active site. Residue His157 coordinates Fe cation.

It belongs to the polypeptide deformylase family. It depends on Fe(2+) as a cofactor.

It carries out the reaction N-terminal N-formyl-L-methionyl-[peptide] + H2O = N-terminal L-methionyl-[peptide] + formate. Functionally, removes the formyl group from the N-terminal Met of newly synthesized proteins. Requires at least a dipeptide for an efficient rate of reaction. N-terminal L-methionine is a prerequisite for activity but the enzyme has broad specificity at other positions. In Listeria monocytogenes serovar 1/2a (strain ATCC BAA-679 / EGD-e), this protein is Peptide deformylase.